The primary structure comprises 227 residues: Translation initiation factor 6 (227 aa).

This sequence belongs to the eIF-6 family.

Functionally, binds to the 50S ribosomal subunit and prevents its association with the 30S ribosomal subunit to form the 70S initiation complex. The sequence is that of Translation initiation factor 6 from Methanococcus vannielii (strain ATCC 35089 / DSM 1224 / JCM 13029 / OCM 148 / SB).